The sequence spans 246 residues: Eukaryotic translation initiation factor 6 (246 aa).

Belongs to the eIF-6 family. In terms of assembly, monomer. Associates with the 60S ribosomal subunit.

Its subcellular location is the cytoplasm. The protein resides in the nucleus. It localises to the nucleolus. Functionally, binds to the 60S ribosomal subunit and prevents its association with the 40S ribosomal subunit to form the 80S initiation complex in the cytoplasm. May also be involved in ribosome biogenesis. Involved in miRNA-mediated gene silencing. This Caenorhabditis elegans protein is Eukaryotic translation initiation factor 6.